We begin with the raw amino-acid sequence, 391 residues long: Serpin B13 (391 aa).

Belongs to the serpin family. Ov-serpin subfamily. Skin specific.

Its subcellular location is the cytoplasm. In terms of biological role, may play a role in the proliferation or differentiation of keratinocytes. The sequence is that of Serpin B13 (SERPINB13) from Homo sapiens (Human).